A 444-amino-acid chain; its full sequence is Divalent metal cation transporter MntH (444 aa).

The next 11 helical transmembrane spans lie at 39–59, 69–89, 109–128, 146–166, 175–195, 215–235, 264–284, 304–324, 346–366, 372–392, and 417–437; these read LLFA…GNFA, GYTL…FQAL, FSRP…AMAT, LPLI…LLFE, LVIG…MFIA, TALT…AVYL, VILA…MAAS, TPLL…TSGI, IPVW…ILAG, ALVI…IALI, and AAAI…GFTI.

Belongs to the NRAMP family.

The protein localises to the cell inner membrane. Functionally, h(+)-stimulated, divalent metal cation uptake system. This Granulibacter bethesdensis (strain ATCC BAA-1260 / CGDNIH1) protein is Divalent metal cation transporter MntH.